The chain runs to 601 residues: DnaJ-like protein MG200 (601 aa).

Positions Lys-5–Gly-77 constitute a J domain. Disordered regions lie at residues Val-143–Glu-163 and Val-205–Pro-272. A compositionally biased stretch (basic and acidic residues) spans Lys-151–Val-160. Residues Glu-263–Pro-272 show a composition bias toward pro residues.

The sequence is that of DnaJ-like protein MG200 from Mycoplasma genitalium (strain ATCC 33530 / DSM 19775 / NCTC 10195 / G37) (Mycoplasmoides genitalium).